A 194-amino-acid chain; its full sequence is Cathelicidin-related peptide isoform 3 (194 aa).

An N-terminal signal peptide occupies residues 1-22; that stretch reads MQGFFWKTWLVLAVCGTPASLA. The propeptide occupies 23 to 164; it reads HRPLSYGEAL…DQPKRVKRFK (142 aa). Intrachain disulfides connect cysteine 79–cysteine 90 and cysteine 101–cysteine 118. Positions 125-145 are enriched in acidic residues; sequence EEEEEEEEEEQKAEAENDEEV. The interval 125 to 156 is disordered; sequence EEEEEEEEEEQKAEAENDEEVEKEKGDEEKDQ. Over residues 146–156 the composition is skewed to basic and acidic residues; it reads EKEKGDEEKDQ.

The protein belongs to the cathelicidin family. In terms of tissue distribution, expressed by the venom gland.

Its subcellular location is the secreted. It is found in the target cell membrane. Its function is as follows. Potent antimicrobial peptide against Gram-negative and Gram-positive bacteria. Adopts an amphipathic alpha helical conformation, that may allow to partition into the target membrane. Low hemolytic activities have been observed on mammalian cells. This Crotalus durissus cascavella (Northeastern Brazilian rattlesnake) protein is Cathelicidin-related peptide isoform 3.